We begin with the raw amino-acid sequence, 853 residues long: Mitochondrial 15S rRNA processing factor CCM1 (853 aa).

Residues 1-25 (MLSLGKNGKTSSTLVRNARRSVIMP) constitute a mitochondrion transit peptide. PPR repeat units lie at residues 310-344 (NRKN…SLEH) and 347-381 (DTKV…NVTK).

The protein belongs to the CCM1 family. Binds to mitochondrial small subunit 15S rRNA.

It is found in the mitochondrion. In terms of biological role, regulates mitochondrial small subunit maturation by controlling 15S rRNA 5'-end processing. Localizes to the 5' precursor of the 15S rRNA in a position that is subsequently occupied by mS47 in the mature yeast mtSSU. Uses structure and sequence-specific RNA recognition, binding to a single-stranded region of the precursor and specifically recognizing bases -6 to -1. The exchange of Ccm1 for mS47 is coupled to the irreversible removal of precursor rRNA that is accompanied by conformational changes of the mitoribosomal proteins uS5m and mS26. These conformational changes signal completion of 5'-end rRNA processing through protection of the mature 5'-end of the 15S rRNA and stabilization of mS47. The removal of the 5' precursor together with the dissociation of Ccm1 may be catalyzed by the 5'-3' exoribonuclease Pet127. Involved in the specific removal of group I introns in mitochondrial encoded transcripts. The polypeptide is Mitochondrial 15S rRNA processing factor CCM1 (CCM1) (Kluyveromyces lactis (strain ATCC 8585 / CBS 2359 / DSM 70799 / NBRC 1267 / NRRL Y-1140 / WM37) (Yeast)).